Consider the following 108-residue polypeptide: Large ribosomal subunit protein bL31B (108 aa).

The interval 81–108 (KPAQPVQAPAEEGPVVKGKKKAPAKKKK) is disordered. Positions 97-108 (KGKKKAPAKKKK) are enriched in basic residues.

Belongs to the bacterial ribosomal protein bL31 family. Type B subfamily. In terms of assembly, part of the 50S ribosomal subunit.

This is Large ribosomal subunit protein bL31B from Chlamydia caviae (strain ATCC VR-813 / DSM 19441 / 03DC25 / GPIC) (Chlamydophila caviae).